The following is a 247-amino-acid chain: Small ribosomal subunit protein uS3 (247 aa).

Residues 38–106 enclose the KH type-2 domain; it reads IRDFLSEGLD…QVQLNILEVK (69 aa). Residues 214–226 are compositionally biased toward basic and acidic residues; that stretch reads SLMNARDERPSRG. The tract at residues 214–247 is disordered; the sequence is SLMNARDERPSRGRRERPRRGGARRQRAEQKQEG. The segment covering 227-238 has biased composition (basic residues); the sequence is RRERPRRGGARR.

Belongs to the universal ribosomal protein uS3 family. In terms of assembly, part of the 30S ribosomal subunit. Forms a tight complex with proteins S10 and S14.

Functionally, binds the lower part of the 30S subunit head. Binds mRNA in the 70S ribosome, positioning it for translation. This Corynebacterium jeikeium (strain K411) protein is Small ribosomal subunit protein uS3.